The sequence spans 215 residues: 3-demethoxyubiquinol 3-hydroxylase (215 aa).

Positions 64, 94, 97, 146, 178, and 181 each coordinate Fe cation.

This sequence belongs to the COQ7 family. It depends on Fe cation as a cofactor.

Its subcellular location is the cell membrane. The enzyme catalyses a 5-methoxy-2-methyl-3-(all-trans-polyprenyl)benzene-1,4-diol + AH2 + O2 = a 3-demethylubiquinol + A + H2O. It participates in cofactor biosynthesis; ubiquinone biosynthesis. Catalyzes the hydroxylation of 2-nonaprenyl-3-methyl-6-methoxy-1,4-benzoquinol during ubiquinone biosynthesis. In Coxiella burnetii (strain CbuG_Q212) (Coxiella burnetii (strain Q212)), this protein is 3-demethoxyubiquinol 3-hydroxylase.